We begin with the raw amino-acid sequence, 462 residues long: Argininosuccinate lyase (462 aa).

This sequence belongs to the lyase 1 family. Argininosuccinate lyase subfamily.

It localises to the cytoplasm. It catalyses the reaction 2-(N(omega)-L-arginino)succinate = fumarate + L-arginine. It functions in the pathway amino-acid biosynthesis; L-arginine biosynthesis; L-arginine from L-ornithine and carbamoyl phosphate: step 3/3. The protein is Argininosuccinate lyase of Streptococcus agalactiae serotype Ia (strain ATCC 27591 / A909 / CDC SS700).